Reading from the N-terminus, the 893-residue chain is Sulfate permease 2 (893 aa).

The tract at residues 1 to 25 (MSREGYPNFEEVEIPDFQETNNTVP) is disordered. The Cytoplasmic portion of the chain corresponds to 1–131 (MSREGYPNFE…VFPIINWLPH (131 aa)). A helical membrane pass occupies residues 132–152 (YNFSWFTADLIAGITIGCVLV). Over 153-163 (PQSMSYAQVAT) the chain is Extracellular. The chain crosses the membrane as a helical span at residues 164–184 (LPAQYGLYSSFIGAYSYSFFA). Over 185 to 188 (TSKD) the chain is Cytoplasmic. The helical transmembrane segment at 189–209 (VCIGPVAVMSLQTAKVIADVT) threads the bilayer. The Extracellular portion of the chain corresponds to 210–221 (AKYPDGDSAITG). Residues 222-242 (PVIATTLALLCGIISAAVGFL) traverse the membrane as a helical segment. Residues 243 to 244 (RL) lie on the Cytoplasmic side of the membrane. A helical membrane pass occupies residues 245 to 265 (GFLVELISLNAVAGFMTGSAF). At 266-305 (NILWGQVPALMGYNSLVNTRAATYKVVIETLKHLPDTKLD) the chain is on the extracellular side. A helical membrane pass occupies residues 306-326 (AVFGLIPLFLLYVWKWWCGTY). Over 327–350 (GPRLNDRYNSKNPRLHKIIKWTYF) the chain is Cytoplasmic. Residues 351–371 (YAQASRNGIIIIVFTCIGWAI) form a helical membrane-spanning segment. At 372–399 (TRGKSKSERPISILGSVPSGLKEVGVFH) the chain is on the extracellular side. A helical transmembrane segment spans residues 400-420 (VPPGLMSKLGPNLPASIIVLL). At 421–443 (LEHIAISKSFGRINDYKVVPDQE) the chain is on the cytoplasmic side. A helical membrane pass occupies residues 444 to 464 (LIAIGVSNLLGTFFNAYPATG). The Extracellular segment spans residues 465 to 483 (SFSRSALKAKCNVRTPLSG). A helical transmembrane segment spans residues 484 to 504 (LFSGSCVLLALYCLTGAFFYI). Topologically, residues 505–532 (PKATLSAVIIHAVSDLLASYQTTWNFWK) are cytoplasmic. A helical membrane pass occupies residues 533–551 (MNPLDFICFIVTVLITVFA). At 552-559 (SIEDGIYF) the chain is on the extracellular side. Residues 560–580 (AMCWSCAMLILKVAFPAGKFL) traverse the membrane as a helical segment. At 581–893 (GRVEVAEVTD…DIPDFAKWDI (313 aa)) the chain is on the cytoplasmic side. In terms of domain architecture, STAS spans 676-854 (DVQILPPPDG…SIVAGHTSYH (179 aa)).

The protein belongs to the SLC26A/SulP transporter (TC 2.A.53) family.

The protein resides in the membrane. Functionally, high affinity uptake of sulfate into the cell. This is Sulfate permease 2 (SUL2) from Saccharomyces cerevisiae (strain ATCC 204508 / S288c) (Baker's yeast).